The primary structure comprises 293 residues: Lipoyl synthase (293 aa).

7 residues coordinate [4Fe-4S] cluster: Cys-38, Cys-43, Cys-49, Cys-64, Cys-68, Cys-71, and Ser-277. The 217-residue stretch at 50–266 (WSRGTATFLL…STIAKNAGIR (217 aa)) folds into the Radical SAM core domain.

It belongs to the radical SAM superfamily. Lipoyl synthase family. Requires [4Fe-4S] cluster as cofactor.

The protein resides in the cytoplasm. It catalyses the reaction [[Fe-S] cluster scaffold protein carrying a second [4Fe-4S](2+) cluster] + N(6)-octanoyl-L-lysyl-[protein] + 2 oxidized [2Fe-2S]-[ferredoxin] + 2 S-adenosyl-L-methionine + 4 H(+) = [[Fe-S] cluster scaffold protein] + N(6)-[(R)-dihydrolipoyl]-L-lysyl-[protein] + 4 Fe(3+) + 2 hydrogen sulfide + 2 5'-deoxyadenosine + 2 L-methionine + 2 reduced [2Fe-2S]-[ferredoxin]. It participates in protein modification; protein lipoylation via endogenous pathway; protein N(6)-(lipoyl)lysine from octanoyl-[acyl-carrier-protein]: step 2/2. Catalyzes the radical-mediated insertion of two sulfur atoms into the C-6 and C-8 positions of the octanoyl moiety bound to the lipoyl domains of lipoate-dependent enzymes, thereby converting the octanoylated domains into lipoylated derivatives. The polypeptide is Lipoyl synthase (Chlorobium chlorochromatii (strain CaD3)).